We begin with the raw amino-acid sequence, 278 residues long: Large ribosomal subunit protein uL2 (278 aa).

Disordered stretches follow at residues Met-1 to Asp-20, Thr-25 to Gly-57, and Val-224 to Arg-278. Composition is skewed to basic residues over residues Ala-45–Gly-57 and Val-269–Arg-278.

The protein belongs to the universal ribosomal protein uL2 family. As to quaternary structure, part of the 50S ribosomal subunit. Forms a bridge to the 30S subunit in the 70S ribosome.

One of the primary rRNA binding proteins. Required for association of the 30S and 50S subunits to form the 70S ribosome, for tRNA binding and peptide bond formation. It has been suggested to have peptidyltransferase activity; this is somewhat controversial. Makes several contacts with the 16S rRNA in the 70S ribosome. The protein is Large ribosomal subunit protein uL2 of Nocardia farcinica (strain IFM 10152).